The sequence spans 353 residues: MTEKGLTYADAGVNRERHYELVRRIAAHTARTLRRPGTLGNIGAFGGLFQLDPARYPEPVLVSGTDGVGTKLRLAFLSGRHDTVGIDLVAMSVNDILCQGAEPLFFLDYIGIGQKDLAVLEQVVKGIADGCLQAGCALIGGETAELPGMYPPGEYDLAGFAVGIVNRDRLLTGEKVAPGDALVGLASSGLHANGYSLARRVLLKVDGGAFDLDDRPPELGGRTVLEVMLTPTRIYVRTVLRLLARFDVHGIANITGGGLHENIPRMLPEGTAAVLRRGAWKEPPVFDLIRRLGPVAQAEMEATFNLGLGMVLAVPADQAEAVAAAARELGEEAWVVGEVAAAEPGGPRVVVRR.

Belongs to the AIR synthase family.

The protein localises to the cytoplasm. It carries out the reaction 2-formamido-N(1)-(5-O-phospho-beta-D-ribosyl)acetamidine + ATP = 5-amino-1-(5-phospho-beta-D-ribosyl)imidazole + ADP + phosphate + H(+). It functions in the pathway purine metabolism; IMP biosynthesis via de novo pathway; 5-amino-1-(5-phospho-D-ribosyl)imidazole from N(2)-formyl-N(1)-(5-phospho-D-ribosyl)glycinamide: step 2/2. The chain is Phosphoribosylformylglycinamidine cyclo-ligase from Symbiobacterium thermophilum (strain DSM 24528 / JCM 14929 / IAM 14863 / T).